A 601-amino-acid chain; its full sequence is Elongation factor 4 (601 aa).

The 184-residue stretch at serine 5–threonine 188 folds into the tr-type G domain. GTP is bound by residues aspartate 17–threonine 22 and asparagine 135–aspartate 138.

It belongs to the TRAFAC class translation factor GTPase superfamily. Classic translation factor GTPase family. LepA subfamily.

It is found in the cell inner membrane. It carries out the reaction GTP + H2O = GDP + phosphate + H(+). Required for accurate and efficient protein synthesis under certain stress conditions. May act as a fidelity factor of the translation reaction, by catalyzing a one-codon backward translocation of tRNAs on improperly translocated ribosomes. Back-translocation proceeds from a post-translocation (POST) complex to a pre-translocation (PRE) complex, thus giving elongation factor G a second chance to translocate the tRNAs correctly. Binds to ribosomes in a GTP-dependent manner. The protein is Elongation factor 4 of Rhodospirillum rubrum (strain ATCC 11170 / ATH 1.1.1 / DSM 467 / LMG 4362 / NCIMB 8255 / S1).